A 227-amino-acid chain; its full sequence is Uracil-DNA glycosylase 2 (227 aa).

Aspartate 67 acts as the Proton acceptor in catalysis.

It belongs to the uracil-DNA glycosylase (UDG) superfamily. UNG family.

It is found in the cytoplasm. The catalysed reaction is Hydrolyzes single-stranded DNA or mismatched double-stranded DNA and polynucleotides, releasing free uracil.. Excises uracil residues from the DNA which can arise as a result of misincorporation of dUMP residues by DNA polymerase or due to deamination of cytosine. In Streptomyces coelicolor (strain ATCC BAA-471 / A3(2) / M145), this protein is Uracil-DNA glycosylase 2 (ung2).